Consider the following 122-residue polypeptide: MIQQESRLKVADNTGAKEILCIRVLGGSGRRYAGIGDVIVATVKDAIPGGNVKKGDVVKAVIVRTKKERRRADGSYIRFDENAAVILRADGDPRGTRIFGPVGRELREKKFMRIISLAPEVL.

It belongs to the universal ribosomal protein uL14 family. As to quaternary structure, part of the 50S ribosomal subunit. Forms a cluster with proteins L3 and L19. In the 70S ribosome, L14 and L19 interact and together make contacts with the 16S rRNA in bridges B5 and B8.

In terms of biological role, binds to 23S rRNA. Forms part of two intersubunit bridges in the 70S ribosome. The polypeptide is Large ribosomal subunit protein uL14 (Kineococcus radiotolerans (strain ATCC BAA-149 / DSM 14245 / SRS30216)).